The following is a 315-amino-acid chain: Homocysteine S-methyltransferase YbgG (315 aa).

In terms of domain architecture, Hcy-binding spans 2–309 (NPIQHILDTY…ENIQEIAAWA (308 aa)). Zn(2+) is bound by residues Cys229, Cys294, and Cys295.

The cofactor is Zn(2+).

It carries out the reaction S-methyl-L-methionine + L-homocysteine = 2 L-methionine + H(+). This chain is Homocysteine S-methyltransferase YbgG (ybgG), found in Bacillus subtilis (strain 168).